Here is a 444-residue protein sequence, read N- to C-terminus: UDP-N-acetylmuramate--L-alanine ligase (444 aa).

110–116 (GAHGKTS) contacts ATP.

This sequence belongs to the MurCDEF family.

It localises to the cytoplasm. It catalyses the reaction UDP-N-acetyl-alpha-D-muramate + L-alanine + ATP = UDP-N-acetyl-alpha-D-muramoyl-L-alanine + ADP + phosphate + H(+). Its pathway is cell wall biogenesis; peptidoglycan biosynthesis. Cell wall formation. The protein is UDP-N-acetylmuramate--L-alanine ligase of Streptococcus pneumoniae (strain JJA).